The following is a 245-amino-acid chain: 5-oxoprolinase subunit A (245 aa).

It belongs to the LamB/PxpA family. Forms a complex composed of PxpA, PxpB and PxpC.

It catalyses the reaction 5-oxo-L-proline + ATP + 2 H2O = L-glutamate + ADP + phosphate + H(+). Its function is as follows. Catalyzes the cleavage of 5-oxoproline to form L-glutamate coupled to the hydrolysis of ATP to ADP and inorganic phosphate. In Serratia proteamaculans (strain 568), this protein is 5-oxoprolinase subunit A.